Here is a 363-residue protein sequence, read N- to C-terminus: tRNA N6-adenosine threonylcarbamoyltransferase (363 aa).

Fe cation is bound by residues histidine 121 and histidine 125. Residues 143-147 (LASGG), aspartate 176, glycine 189, and asparagine 287 contribute to the substrate site. A Fe cation-binding site is contributed by aspartate 315.

It belongs to the KAE1 / TsaD family. It depends on Fe(2+) as a cofactor.

It localises to the cytoplasm. The enzyme catalyses L-threonylcarbamoyladenylate + adenosine(37) in tRNA = N(6)-L-threonylcarbamoyladenosine(37) in tRNA + AMP + H(+). Required for the formation of a threonylcarbamoyl group on adenosine at position 37 (t(6)A37) in tRNAs that read codons beginning with adenine. Is involved in the transfer of the threonylcarbamoyl moiety of threonylcarbamoyl-AMP (TC-AMP) to the N6 group of A37, together with TsaE and TsaB. TsaD likely plays a direct catalytic role in this reaction. The chain is tRNA N6-adenosine threonylcarbamoyltransferase from Rhodopseudomonas palustris (strain TIE-1).